A 1025-amino-acid chain; its full sequence is Exocyst complex component 6 (1025 aa).

Basic and acidic residues-rich tracts occupy residues 1–10 (MSNKKQKEEI) and 22–52 (MVRD…ENVK). Disordered stretches follow at residues 1–122 (MSNK…TRHL), 135–154 (LSSQ…DQAK), and 666–691 (QFGD…DENE). Residues 19–68 (LKTMVRDKDKEQKEEKREKKEKKRLEKKEAENVKKEKKKEKKELKKIGKA) are a coiled coil. Over residues 71 to 93 (SGSITSDSSTHSGAQEFDSYGND) the composition is skewed to low complexity. Over residues 104-118 (SIDSNGLSSSGQPMQ) the composition is skewed to polar residues. Low complexity-rich tracts occupy residues 135–147 (LSSQ…LPHS) and 666–677 (QFGDKNLNNNNN). Residues 678–691 (NDDDDDYFDEDENE) show a composition bias toward acidic residues.

It belongs to the SEC15 family. The exocyst complex is composed of sec3/exoc1, sec5/exoc2, sec6/exoc3, sec8/exoc4, sec10/exoc5, sec15/exoc6, exo70/exoc7 and exo84/exoc8.

It is found in the cytoplasm. The protein localises to the perinuclear region. The protein resides in the midbody. Its subcellular location is the midbody ring. Component of the exocyst complex involved in the docking of exocytic vesicles with fusion sites on the plasma membrane. The protein is Exocyst complex component 6 (exoc6) of Dictyostelium discoideum (Social amoeba).